A 113-amino-acid polypeptide reads, in one-letter code: uncharacterized protein (113 aa).

This is an uncharacterized protein from Mycoplasma pneumoniae (strain ATCC 29342 / M129 / Subtype 1) (Mycoplasmoides pneumoniae).